The sequence spans 159 residues: Putative RING-H2 finger protein ATL69 (159 aa).

Residues 13-33 (LGYGIAIAVSILVLISFIMLA) form a helical membrane-spanning segment. The segment at 94–136 (CSICLCDYEAREPVRCIPECNHCFHTDCVDEWLRTSATCPLCR) adopts an RING-type; atypical zinc-finger fold.

It belongs to the RING-type zinc finger family. ATL subfamily.

It is found in the membrane. It carries out the reaction S-ubiquitinyl-[E2 ubiquitin-conjugating enzyme]-L-cysteine + [acceptor protein]-L-lysine = [E2 ubiquitin-conjugating enzyme]-L-cysteine + N(6)-ubiquitinyl-[acceptor protein]-L-lysine.. It participates in protein modification; protein ubiquitination. The chain is Putative RING-H2 finger protein ATL69 (ATL69) from Arabidopsis thaliana (Mouse-ear cress).